The chain runs to 230 residues: Thymidylate kinase (230 aa).

Gly-20–Ser-27 contacts ATP.

Belongs to the thymidylate kinase family.

The enzyme catalyses dTMP + ATP = dTDP + ADP. Functionally, phosphorylation of dTMP to form dTDP in both de novo and salvage pathways of dTTP synthesis. The sequence is that of Thymidylate kinase from Nitrobacter winogradskyi (strain ATCC 25391 / DSM 10237 / CIP 104748 / NCIMB 11846 / Nb-255).